Reading from the N-terminus, the 520-residue chain is Glucose-1-phosphate adenylyltransferase small subunit, chloroplastic (520 aa).

The transit peptide at 1–71 (MATMAAIGSL…RTPSIVSPKA (71 aa)) directs the protein to the chloroplast. The disordered stretch occupies residues 1–81 (MATMAAIGSL…VSDSQNSQTC (81 aa)). Positions 14–27 (SSSSNHTRRLSSSS) are enriched in low complexity. A compositionally biased stretch (polar residues) spans 28-51 (QRKTLSFSSSSLTGEKLNPTQEII).

Belongs to the bacterial/plant glucose-1-phosphate adenylyltransferase family. Heterotetramer. As to expression, leaves.

It is found in the plastid. Its subcellular location is the chloroplast. It catalyses the reaction alpha-D-glucose 1-phosphate + ATP + H(+) = ADP-alpha-D-glucose + diphosphate. It participates in glycan biosynthesis; starch biosynthesis. Activated by 3'phosphoglycerate, inhibited by orthophosphate. Allosteric regulation. In terms of biological role, this protein plays a role in synthesis of starch. It catalyzes the synthesis of the activated glycosyl donor, ADP-glucose from Glc-1-P and ATP. This is Glucose-1-phosphate adenylyltransferase small subunit, chloroplastic (AGPS1) from Brassica napus (Rape).